The chain runs to 170 residues: Large ribosomal subunit protein uL5 (170 aa).

This sequence belongs to the universal ribosomal protein uL5 family. Part of the 50S ribosomal subunit; contacts the 5S rRNA and probably tRNA. Forms a bridge to the 30S subunit in the 70S ribosome.

Functionally, this is one of the proteins that bind and probably mediate the attachment of the 5S RNA into the large ribosomal subunit, where it forms part of the central protuberance. In the 70S ribosome it contacts protein S13 of the 30S subunit (bridge B1b), connecting the 2 subunits; this bridge is implicated in subunit movement. May contact the P site tRNA; the 5S rRNA and some of its associated proteins might help stabilize positioning of ribosome-bound tRNAs. The sequence is that of Large ribosomal subunit protein uL5 from Thermoplasma volcanium (strain ATCC 51530 / DSM 4299 / JCM 9571 / NBRC 15438 / GSS1).